Here is a 167-residue protein sequence, read N- to C-terminus: Ubiquitin-conjugating enzyme E2 2 (167 aa).

Positions P4 to E150 constitute a UBC core domain. The active-site Glycyl thioester intermediate is the C88. The tract at residues S148 to E167 is disordered. Positions D151–E167 are enriched in acidic residues.

It belongs to the ubiquitin-conjugating enzyme family.

The protein localises to the cytoplasm. It is found in the nucleus. It catalyses the reaction S-ubiquitinyl-[E1 ubiquitin-activating enzyme]-L-cysteine + [E2 ubiquitin-conjugating enzyme]-L-cysteine = [E1 ubiquitin-activating enzyme]-L-cysteine + S-ubiquitinyl-[E2 ubiquitin-conjugating enzyme]-L-cysteine.. It participates in protein modification; protein ubiquitination. Its function is as follows. Catalyzes the covalent attachment of ubiquitin to other proteins. Plays a role in transcription regulation by catalyzing the monoubiquitination of histone H2B to form H2BK123ub1. H2BK123ub1 gives a specific tag for epigenetic transcriptional activation and is also a prerequisite for H3K4me and H3K79me formation. Also involved in postreplication repair of UV-damaged DNA, in N-end rule-dependent protein degradation and in sporulation. In Candida glabrata (strain ATCC 2001 / BCRC 20586 / JCM 3761 / NBRC 0622 / NRRL Y-65 / CBS 138) (Yeast), this protein is Ubiquitin-conjugating enzyme E2 2 (UBC2).